The sequence spans 207 residues: Sodium/potassium-transporting ATPase subunit beta-1-interacting protein 1 (207 aa).

Helical transmembrane passes span 2-22 (GKCS…VAAL), 35-55 (APIL…FGTV), and 62-82 (LILY…IICF). Asn-100 carries an N-linked (GlcNAc...) asparagine glycan. The helical transmembrane segment at 147–167 (ALSSALQIFLALFGFVFACYV) threads the bilayer.

The protein belongs to the NKAIN family. As to quaternary structure, interacts with ATP1B1 C-terminus. As to expression, detected in the brain only and specifically in neurons. Expressed in multiple regions such as cerebral cortex, thalamus, hippocampus, olfactory bulb and brainstem as well as in cerebellum with high expression in granular cell layer.

The protein resides in the cell membrane. The polypeptide is Sodium/potassium-transporting ATPase subunit beta-1-interacting protein 1 (Nkain1) (Mus musculus (Mouse)).